The primary structure comprises 1112 residues: Constitutive coactivator of PPAR-gamma-like protein 1 (1112 aa).

The interaction with YES1, SRC and FYN stretch occupies residues 339 to 403; that stretch reads PPHYLARPNP…YSLSEPALTL (65 aa). Positions 372–525 are disordered; the sequence is QAKPAVPQVP…GKGSHMGTVQ (154 aa). Polar residues-rich tracts occupy residues 403–418 and 433–445; these read LDTSGKNLTEQNSYSN and SPINLAQSGSPNH. Over residues 479–500 the composition is skewed to basic and acidic residues; that stretch reads GWEKTGSHAEPLARGDPGDQVK. Residues 503–512 are compositionally biased toward polar residues; that stretch reads GSSTASSGSQ. T653 is subject to Phosphothreonine. The interval 827–1112 is RNA binding; the sequence is AEQAAKVEKM…LEAAVLNKEE (286 aa). Residues R871, R882, and R884 each carry the omega-N-methylarginine modification. The tract at residues 919-943 is disordered; the sequence is AFSGSDSSRTSKSQGGVQPIPSQGG. A compositionally biased stretch (polar residues) spans 922–934; sequence GSDSSRTSKSQGG. N6-acetyllysine is present on K930. S958 is subject to Phosphoserine. 2 positions are modified to omega-N-methylarginine: R980 and R984. A phosphoserine mark is found at S1021 and S1042. Positions 1030 to 1090 are disordered; sequence KSKSGESKSS…PCNTNPHLNA (61 aa). The span at 1070-1090 shows a compositional bias: polar residues; it reads HSESALNNDSKPCNTNPHLNA.

It belongs to the constitutive coactivator of PPAR-gamma family. Interacts with PURA. Interacts with SRC family protein kinases YES1, SRC and FYN. Upon tyrosine phosphorylation, interacts with PIK3R1. Interacts with IGF2BP1/IMP-1 in an RNA-dependent manner. Arg-980 is dimethylated, probably to asymmetric dimethylarginine. In terms of processing, phosphorylated on tyrosine by src family kinases upon ultraviolet exposure. In the brain, predominantly expressed in the hippocampus, caudate putamen, cerebral cortex and cerebellum. Expression is restricted to neurons (at protein level).

It is found in the cytoplasm. It localises to the cell membrane. Component of the oxidative stress-induced survival signaling. May regulate the activation of SRC family protein kinases. May act as a scaffolding protein enabling SRC family protein kinases to phosphorylate and activate PI3-kinase. Binds IGF2 RNA and promotes the production of IGF2 protein. This is Constitutive coactivator of PPAR-gamma-like protein 1 (FAM120A) from Mus musculus (Mouse).